The chain runs to 284 residues: tRNA-cytidine(32) 2-sulfurtransferase (284 aa).

Residues 45–50 carry the PP-loop motif motif; it reads SGGKDS. The [4Fe-4S] cluster site is built by Cys-120, Cys-123, and Cys-211.

This sequence belongs to the TtcA family. In terms of assembly, homodimer. The cofactor is Mg(2+). It depends on [4Fe-4S] cluster as a cofactor.

The protein resides in the cytoplasm. The catalysed reaction is cytidine(32) in tRNA + S-sulfanyl-L-cysteinyl-[cysteine desulfurase] + AH2 + ATP = 2-thiocytidine(32) in tRNA + L-cysteinyl-[cysteine desulfurase] + A + AMP + diphosphate + H(+). It functions in the pathway tRNA modification. In terms of biological role, catalyzes the ATP-dependent 2-thiolation of cytidine in position 32 of tRNA, to form 2-thiocytidine (s(2)C32). The sulfur atoms are provided by the cysteine/cysteine desulfurase (IscS) system. This chain is tRNA-cytidine(32) 2-sulfurtransferase, found in Alcanivorax borkumensis (strain ATCC 700651 / DSM 11573 / NCIMB 13689 / SK2).